The following is a 375-amino-acid chain: Histidine biosynthesis bifunctional protein HisB (375 aa).

Positions 1–168 (MTPIVFIDRD…GIAHTLADAP (168 aa)) are histidinol-phosphatase. The active-site Nucleophile is Asp8. Mg(2+)-binding residues include Asp8, Asp10, and Asp128. Asp10 acts as the Proton donor in catalysis. Residues 169-375 (RRAVVQRHTK…HVLPSTKGAL (207 aa)) are imidazoleglycerol-phosphate dehydratase.

This sequence in the N-terminal section; belongs to the histidinol-phosphatase family. It in the C-terminal section; belongs to the imidazoleglycerol-phosphate dehydratase family. The cofactor is Mg(2+).

It localises to the cytoplasm. It carries out the reaction D-erythro-1-(imidazol-4-yl)glycerol 3-phosphate = 3-(imidazol-4-yl)-2-oxopropyl phosphate + H2O. The enzyme catalyses L-histidinol phosphate + H2O = L-histidinol + phosphate. Its pathway is amino-acid biosynthesis; L-histidine biosynthesis; L-histidine from 5-phospho-alpha-D-ribose 1-diphosphate: step 6/9. The protein operates within amino-acid biosynthesis; L-histidine biosynthesis; L-histidine from 5-phospho-alpha-D-ribose 1-diphosphate: step 8/9. This is Histidine biosynthesis bifunctional protein HisB from Xylella fastidiosa (strain 9a5c).